A 265-amino-acid polypeptide reads, in one-letter code: GTP cyclohydrolase FolE2 (265 aa).

This sequence belongs to the GTP cyclohydrolase IV family.

It carries out the reaction GTP + H2O = 7,8-dihydroneopterin 3'-triphosphate + formate + H(+). It participates in cofactor biosynthesis; 7,8-dihydroneopterin triphosphate biosynthesis; 7,8-dihydroneopterin triphosphate from GTP: step 1/1. In terms of biological role, converts GTP to 7,8-dihydroneopterin triphosphate. The chain is GTP cyclohydrolase FolE2 from Bordetella bronchiseptica (strain ATCC BAA-588 / NCTC 13252 / RB50) (Alcaligenes bronchisepticus).